Reading from the N-terminus, the 427-residue chain is Peptidase B (427 aa).

2 residues coordinate Mn(2+): K195 and D200. The active site involves K207. Positions 218, 277, and 279 each coordinate Mn(2+). R281 is an active-site residue.

Belongs to the peptidase M17 family. Homohexamer. The cofactor is Mn(2+).

The protein resides in the cytoplasm. It catalyses the reaction Release of an N-terminal amino acid, Xaa, from a peptide or arylamide. Xaa is preferably Glu or Asp but may be other amino acids, including Leu, Met, His, Cys and Gln.. Probably plays an important role in intracellular peptide degradation. This chain is Peptidase B, found in Escherichia coli (strain K12 / MC4100 / BW2952).